The primary structure comprises 363 residues: tRNA N6-adenosine threonylcarbamoyltransferase (363 aa).

Fe cation contacts are provided by histidine 121 and histidine 125. Substrate contacts are provided by residues leucine 143–glycine 147, aspartate 176, glycine 189, and asparagine 287. Position 315 (aspartate 315) interacts with Fe cation.

This sequence belongs to the KAE1 / TsaD family. Fe(2+) is required as a cofactor.

It localises to the cytoplasm. It carries out the reaction L-threonylcarbamoyladenylate + adenosine(37) in tRNA = N(6)-L-threonylcarbamoyladenosine(37) in tRNA + AMP + H(+). In terms of biological role, required for the formation of a threonylcarbamoyl group on adenosine at position 37 (t(6)A37) in tRNAs that read codons beginning with adenine. Is involved in the transfer of the threonylcarbamoyl moiety of threonylcarbamoyl-AMP (TC-AMP) to the N6 group of A37, together with TsaE and TsaB. TsaD likely plays a direct catalytic role in this reaction. The protein is tRNA N6-adenosine threonylcarbamoyltransferase of Rhodopseudomonas palustris (strain HaA2).